Reading from the N-terminus, the 256-residue chain is Small ribosomal subunit protein uS2 (256 aa).

Belongs to the universal ribosomal protein uS2 family.

This is Small ribosomal subunit protein uS2 from Rhizobium rhizogenes (strain K84 / ATCC BAA-868) (Agrobacterium radiobacter).